The sequence spans 1028 residues: Contactin-6 (1028 aa).

Positions 1-19 (MRLLWKLVILLPLINSCAG) are cleaved as a signal peptide. Ig-like C2-type domains are found at residues 32–117 (PQDV…AKLQ), 122–208 (EDFE…RSVQ), 227–308 (PKIE…RNLA), 318–402 (PEWE…AELR), 408–495 (PDFS…GSLI), and 499–587 (RTVI…ERLS). 6 cysteine pairs are disulfide-bonded: Cys-50/Cys-100, Cys-144/Cys-196, Cys-249/Cys-297, Cys-339/Cys-386, Cys-431/Cys-479, and Cys-521/Cys-577. N-linked (GlcNAc...) asparagine glycans are attached at residues Asn-65 and Asn-193. Residues Asn-368, Asn-377, and Asn-468 are each glycosylated (N-linked (GlcNAc...) asparagine). Fibronectin type-III domains follow at residues 600–698 (PPED…TKAS), 703–800 (APVN…SGED), 805–901 (APRG…TKKS), and 902–996 (PPSQ…KMSS). Asn-659, Asn-765, Asn-860, and Asn-865 each carry an N-linked (GlcNAc...) asparagine glycan. Residue Tyr-882 is modified to Phosphotyrosine. Residues 887-902 (TGPSSPPVNVTTKKSP) are compositionally biased toward polar residues. A disordered region spans residues 887-908 (TGPSSPPVNVTTKKSPPSQPPA). Asn-895, Asn-931, Asn-956, and Asn-957 each carry an N-linked (GlcNAc...) asparagine glycan. A lipid anchor (GPI-anchor amidated serine) is attached at Ser-999. A propeptide spans 1000–1028 (VGVQILKPSTQFLTMVGFFYCFVIQPLSR) (removed in mature form).

The protein belongs to the immunoglobulin superfamily. Contactin family. Interacts with PTPRG. In terms of tissue distribution, specifically expressed in neuronal cells. In brain, it is expressed in spinal cord, cerebrum and cerebellum. At 17 dpc, it is expressed in hippocampus, cerebellum, and the brain stem. Strongly expressed after birth with a maximum level between P1 and P21, which corresponds to the time frame of oligodendrogliogenesis.

The protein localises to the cell membrane. Its function is as follows. Contactins mediate cell surface interactions during nervous system development. Participates in oligodendrocytes generation by acting as a ligand of NOTCH1. Its association with NOTCH1 promotes NOTCH1 activation through the released notch intracellular domain (NICD) and subsequent translocation to the nucleus. May be involved in motor coordination. The protein is Contactin-6 (Cntn6) of Rattus norvegicus (Rat).